The primary structure comprises 661 residues: Zinc finger protein 81 (661 aa).

A KRAB domain is found at 21–92; sequence VSFEDVTVDF…EGEAPHQSCS (72 aa). A Glycyl lysine isopeptide (Lys-Gly) (interchain with G-Cter in SUMO2) cross-link involves residue Lys266. 12 C2H2-type zinc fingers span residues 330–352, 358–380, 386–408, 414–436, 442–464, 470–492, 498–520, 526–548, 554–576, 582–604, 610–632, and 638–660; these read YICT…EKTH, YKCN…QTTH, FECS…QKIH, HKCS…QRIH, YICT…QRIH, YECS…KRIH, YICT…QKSH, YICA…QTIH, YVCA…QRIH, YKCP…QRIH, and YKCS…RNIH.

This sequence belongs to the krueppel C2H2-type zinc-finger protein family.

It localises to the nucleus. May be involved in transcriptional regulation. The sequence is that of Zinc finger protein 81 (ZNF81) from Homo sapiens (Human).